The sequence spans 414 residues: MRLDTRFLSGFPEALSRHGPLLEEARRRLLAKRGEPGSMLGWMDLPEDTETLREVRRYREANPWVEDFVLIGIGGSALGPKALEAAFNESGVRFHYLDHVEPEPTLRLLRTLDPRKTLVNAVSKSGSTAETLAGLAVFLKWLKAHLGEDWRRHLVVTTDPKEGPLRAFAEREGLKAFAIPKEVGGRFSALSPVGLLPLAFAGADLDALLMGARKANETALAPLEESLPLKTALLLHLHRHLPVHVFMVYSERLSHLPSWFVQLHDESLGKVDRQGQRVGTTAVPALGPKDQHAQVQLFREGPLDKLLALVIPEAPLEDVEIPEVGGLEAASYLFGKTLFQLLKAEAEATYEALAEAGQRVYALFLPEVSPYAVGWLMQHLMWQTAFLGELWEVNAFDQPGVELGKVLTRKRLAG.

Glu266 functions as the Proton donor in the catalytic mechanism. Catalysis depends on residues His292 and Lys405.

It belongs to the GPI family.

It is found in the cytoplasm. It catalyses the reaction alpha-D-glucose 6-phosphate = beta-D-fructose 6-phosphate. It participates in carbohydrate biosynthesis; gluconeogenesis. Its pathway is carbohydrate degradation; glycolysis; D-glyceraldehyde 3-phosphate and glycerone phosphate from D-glucose: step 2/4. Functionally, catalyzes the reversible isomerization of glucose-6-phosphate to fructose-6-phosphate. This chain is Glucose-6-phosphate isomerase, found in Thermus thermophilus (strain ATCC BAA-163 / DSM 7039 / HB27).